The primary structure comprises 198 residues: Na(+)-translocating NADH-quinone reductase subunit E (198 aa).

The next 6 membrane-spanning stretches (helical) occupy residues 11 to 31 (AVFVENMALAFFLGMCTFLAV), 35 to 55 (VSTAFGLGIAVTVVLGISVPA), 77 to 97 (FLNFITFIGVIAAIVQVLEMI), 109 to 129 (LGIFLPLITVNCAIFGGVSFM), 140 to 160 (IVYGFGSGMGWMLAIVALAGI), and 176 to 196 (LGITFISTGLMALGFMSFAGV).

This sequence belongs to the NqrDE/RnfAE family. Composed of six subunits; NqrA, NqrB, NqrC, NqrD, NqrE and NqrF.

The protein resides in the cell inner membrane. It catalyses the reaction a ubiquinone + n Na(+)(in) + NADH + H(+) = a ubiquinol + n Na(+)(out) + NAD(+). NQR complex catalyzes the reduction of ubiquinone-1 to ubiquinol by two successive reactions, coupled with the transport of Na(+) ions from the cytoplasm to the periplasm. NqrA to NqrE are probably involved in the second step, the conversion of ubisemiquinone to ubiquinol. This chain is Na(+)-translocating NADH-quinone reductase subunit E, found in Yersinia pestis bv. Antiqua (strain Nepal516).